A 191-amino-acid chain; its full sequence is Methylated-DNA--protein-cysteine methyltransferase (191 aa).

Tyrosine 120 and arginine 134 together coordinate DNA. The Nucleophile; methyl group acceptor role is filled by cysteine 151.

It belongs to the MGMT family.

The protein localises to the nucleus. The catalysed reaction is a 6-O-methyl-2'-deoxyguanosine in DNA + L-cysteinyl-[protein] = S-methyl-L-cysteinyl-[protein] + a 2'-deoxyguanosine in DNA. It carries out the reaction a 4-O-methyl-thymidine in DNA + L-cysteinyl-[protein] = a thymidine in DNA + S-methyl-L-cysteinyl-[protein]. Functionally, involved in the cellular defense against the biological effects of O6-methylguanine (O6-MeG) and O4-methylthymine (O4-MeT) in DNA. Repairs the methylated nucleobase in DNA by stoichiometrically transferring the methyl group to a cysteine residue in the enzyme. This is a suicide reaction: the enzyme is irreversibly inactivated. This chain is Methylated-DNA--protein-cysteine methyltransferase (MGT1), found in Debaryomyces hansenii (strain ATCC 36239 / CBS 767 / BCRC 21394 / JCM 1990 / NBRC 0083 / IGC 2968) (Yeast).